We begin with the raw amino-acid sequence, 243 residues long: DNA repair protein RecO (243 aa).

Belongs to the RecO family.

Involved in DNA repair and RecF pathway recombination. This is DNA repair protein RecO from Caulobacter vibrioides (strain NA1000 / CB15N) (Caulobacter crescentus).